The sequence spans 100 residues: Urease subunit gamma (100 aa).

It belongs to the urease gamma subunit family. Heterotrimer of UreA (gamma), UreB (beta) and UreC (alpha) subunits. Three heterotrimers associate to form the active enzyme.

Its subcellular location is the cytoplasm. It catalyses the reaction urea + 2 H2O + H(+) = hydrogencarbonate + 2 NH4(+). The protein operates within nitrogen metabolism; urea degradation; CO(2) and NH(3) from urea (urease route): step 1/1. This chain is Urease subunit gamma, found in Rhodococcus opacus (strain B4).